The primary structure comprises 357 residues: Fructose-1,6-bisphosphatase class 1 3 (357 aa).

Residues Glu94, Asp116, Leu118, and Asp119 each contribute to the Mg(2+) site. Substrate contacts are provided by residues 119 to 122 (DGSS) and Asn211. Glu283 provides a ligand contact to Mg(2+).

This sequence belongs to the FBPase class 1 family. In terms of assembly, homotetramer. It depends on Mg(2+) as a cofactor.

Its subcellular location is the cytoplasm. It catalyses the reaction beta-D-fructose 1,6-bisphosphate + H2O = beta-D-fructose 6-phosphate + phosphate. Its pathway is carbohydrate biosynthesis; Calvin cycle. The chain is Fructose-1,6-bisphosphatase class 1 3 from Methylibium petroleiphilum (strain ATCC BAA-1232 / LMG 22953 / PM1).